The following is a 75-amino-acid chain: Signaling peptide TAXIMIN 1 (75 aa).

The first 29 residues, 1–29 (MCDGDCRPLGFLLGLPFAFLSLLLSIIGV), serve as a signal peptide directing secretion.

In terms of tissue distribution, expressed in shoot apical meristems (SAM); mostly specific to the L1 layer in the center of the meristem but also detected in the L2 layer in organ primordia. Also observed in the vasculature of seedling roots.

Its subcellular location is the secreted. Counteracted by the antibiotic cefotaxime during responses to light stress. Its function is as follows. Signaling peptide involved in the regulation of lateral organs separation, including fruits and leaves. Involved in the perception of and response to light stress via the control of sinapoyl-malate accumulation, a UV-B protecting compound. This Arabidopsis thaliana (Mouse-ear cress) protein is Signaling peptide TAXIMIN 1.